Reading from the N-terminus, the 487-residue chain is Serine/threonine-protein kinase BSK8 (487 aa).

G2 is lipidated: N-myristoyl glycine. S20 carries the phosphoserine modification. The Protein kinase domain maps to 59 to 325 (ENIVSEHGER…DLEIASHQLL (267 aa)). ATP-binding positions include 65–73 (HGERAPNVV), N71, K87, and 133–135 (EFM). The active-site Proton acceptor is the D181. Residues 185-186 (YR) and N205 each bind ATP. Phosphoserine is present on S213.

It belongs to the protein kinase superfamily. Ser/Thr protein kinase family. In terms of assembly, interacts with ASK7/BIN2, BSK1, BSK5, BSK6 and BSK11. Interacts with BSL2. In terms of processing, phosphorylated by BRI1, ASK7/BIN2 and ASK9/BIL2.

The protein localises to the cell membrane. It carries out the reaction L-seryl-[protein] + ATP = O-phospho-L-seryl-[protein] + ADP + H(+). The catalysed reaction is L-threonyl-[protein] + ATP = O-phospho-L-threonyl-[protein] + ADP + H(+). Its function is as follows. Probable serine/threonine kinase that acts as a positive regulator of brassinosteroid (BR) signaling downstream of the receptor kinase BRI1. Functions redundantly with BSK3, BSK4, BSK6 and BSK7. Involved in the regulation of sucrose-phosphate synthase 1 (SPS1) in the context of sucrose resuply after starvation. Activates BSL2, a phosphatase that may dephosphorylate SPS1, leading to the activation of SPS1. This Arabidopsis thaliana (Mouse-ear cress) protein is Serine/threonine-protein kinase BSK8.